The chain runs to 920 residues: Disintegrin and metalloproteinase domain-containing protein 19 (920 aa).

Residues 1-26 (MPGRAGVARFCLLALALQLHWPLAAC) form the signal peptide. The propeptide occupies 27 to 204 (EPGWTTRGSQ…TKKQPRRMKR (178 aa)). Topologically, residues 27-703 (EPGWTTRGSQ…VDSGPLPPKS (677 aa)) are extracellular. The Cysteine switch motif lies at 131–138 (STCRGIRG). Cysteine 133 is a Zn(2+) binding site. Asparagine 145 carries an N-linked (GlcNAc...) asparagine glycan. The Peptidase M12B domain occupies 211–409 (KYVELYLVAD…GGGMCLSNMP (199 aa)). 3 cysteine pairs are disulfide-bonded: cysteine 321–cysteine 404, cysteine 361–cysteine 388, and cysteine 362–cysteine 371. Histidine 346 is a Zn(2+) binding site. Glutamate 347 is a catalytic residue. Zn(2+)-binding residues include histidine 350 and histidine 356. The region spanning 417–503 (GRRCGNGYLE…HCPTNYYQMD (87 aa)) is the Disintegrin domain. 2 N-linked (GlcNAc...) asparagine glycosylation sites follow: asparagine 445 and asparagine 448. A disulfide bond links cysteine 475 and cysteine 495. A glycan (N-linked (GlcNAc...) asparagine) is linked at asparagine 649. An EGF-like domain is found at 654 to 686 (ETEGCGKKCNGHGVCNNNKNCHCFPGWSPPFCN). 3 disulfide bridges follow: cysteine 658/cysteine 668, cysteine 662/cysteine 674, and cysteine 676/cysteine 685. The helical transmembrane segment at 704–724 (VGPVIAGVFSALFVLAVLVLL) threads the bilayer. At 725-920 (CHCYRQSHKL…RVGAIISSKI (196 aa)) the chain is on the cytoplasmic side. Residues 755–920 (SQSGGTGHAN…RVGAIISSKI (166 aa)) form a disordered region. Positions 767–783 (FKLQTPQGKRKVTNTPE) are enriched in polar residues. A compositionally biased stretch (basic and acidic residues) spans 825 to 834 (ARIERKESAR). The short motif at 835–846 (RPPPSRPMPPAP) is the SH3-binding element. Composition is skewed to pro residues over residues 835 to 846 (RPPPSRPMPPAP) and 888 to 903 (TSGP…PVPK).

Interacts with SH3PXD2A. Zn(2+) is required as a cofactor. The precursor is cleaved by a furin endopeptidase. In terms of tissue distribution, widely expressed, with the highest expression in bone, heart and lung, followed by brain and spleen and relatively low expression in liver, skeletal muscle, kidney and testis. In bone, primarily expressed in cell of the osteoblast lineage and not detected in mature osteoclasts.

It is found in the membrane. In terms of biological role, participates in the proteolytic processing of beta-type neuregulin isoforms which are involved in neurogenesis and synaptogenesis, suggesting a regulatory role in glial cell. Also cleaves alpha-2 macroglobulin. May be involved in osteoblast differentiation and/or osteoblast activity in bone. This chain is Disintegrin and metalloproteinase domain-containing protein 19 (Adam19), found in Mus musculus (Mouse).